The chain runs to 880 residues: Translation initiation factor IF-2 (880 aa).

Basic and acidic residues-rich tracts occupy residues 180 to 194 (QEAATKRKQDEEAAK) and 202 to 228 (LAEEHSKRWAEEERQRLEAEKNGDHHI). Positions 180 to 289 (QEAATKRKQD…APESMAHGFN (110 aa)) are disordered. A compositionally biased stretch (basic residues) spans 249 to 262 (GRRARNKSNAKKRG). The tr-type G domain occupies 380–549 (SRAPVVTIMG…LLQAEVLELK (170 aa)). A G1 region spans residues 389-396 (GHVDHGKT). Residue 389–396 (GHVDHGKT) participates in GTP binding. The G2 stretch occupies residues 414–418 (GITQH). The segment at 435 to 438 (DTPG) is G3. GTP is bound by residues 435 to 439 (DTPGH) and 489 to 492 (NKMD). Positions 489-492 (NKMD) are G4. The interval 525 to 527 (SAK) is G5.

It belongs to the TRAFAC class translation factor GTPase superfamily. Classic translation factor GTPase family. IF-2 subfamily.

It localises to the cytoplasm. One of the essential components for the initiation of protein synthesis. Protects formylmethionyl-tRNA from spontaneous hydrolysis and promotes its binding to the 30S ribosomal subunits. Also involved in the hydrolysis of GTP during the formation of the 70S ribosomal complex. The sequence is that of Translation initiation factor IF-2 from Shewanella baltica (strain OS223).